The chain runs to 283 residues: Protease HtpX homolog (283 aa).

2 consecutive transmembrane segments (helical) span residues 7–27 and 29–49; these read TAVL…VLGG and QGMA…YWFS. H131 is a binding site for Zn(2+). E132 is an active-site residue. Position 135 (H135) interacts with Zn(2+). 2 helical membrane-spanning segments follow: residues 146–166 and 177–197; these read ISAT…FFGG and IAGI…QMAI. Zn(2+) is bound at residue E202.

The protein belongs to the peptidase M48B family. The cofactor is Zn(2+).

It localises to the cell inner membrane. The sequence is that of Protease HtpX homolog from Methylibium petroleiphilum (strain ATCC BAA-1232 / LMG 22953 / PM1).